Here is a 498-residue protein sequence, read N- to C-terminus: Ribulose bisphosphate carboxylase large chain (498 aa).

Positions 1 to 2 (MS) are excised as a propeptide. Pro-3 carries the N-acetylproline modification. An N6,N6,N6-trimethyllysine modification is found at Lys-14. Residues Asn-123 and Thr-173 each coordinate substrate. The Proton acceptor role is filled by Lys-175. A substrate-binding site is contributed by Lys-177. Mg(2+) is bound by residues Lys-201, Asp-203, and Glu-204. Lys-201 is subject to N6-carboxylysine. The active-site Proton acceptor is the His-294. Substrate is bound by residues Arg-295, His-327, and Ser-379. The interval 471–498 (PVDTLDPNDKKQRDNEDTLADKLFGDKG) is disordered.

This sequence belongs to the RuBisCO large chain family. Type I subfamily. As to quaternary structure, heterohexadecamer of 8 large chains and 8 small chains; disulfide-linked. The disulfide link is formed within the large subunit homodimers. Mg(2+) is required as a cofactor. Post-translationally, the disulfide bond which can form in the large chain dimeric partners within the hexadecamer appears to be associated with oxidative stress and protein turnover.

It localises to the plastid. The enzyme catalyses 2 (2R)-3-phosphoglycerate + 2 H(+) = D-ribulose 1,5-bisphosphate + CO2 + H2O. It carries out the reaction D-ribulose 1,5-bisphosphate + O2 = 2-phosphoglycolate + (2R)-3-phosphoglycerate + 2 H(+). Its function is as follows. RuBisCO catalyzes two reactions: the carboxylation of D-ribulose 1,5-bisphosphate, the primary event in carbon dioxide fixation, as well as the oxidative fragmentation of the pentose substrate in the photorespiration process. Both reactions occur simultaneously and in competition at the same active site. In Cuscuta reflexa (Southern Asian dodder), this protein is Ribulose bisphosphate carboxylase large chain (rbcL).